Here is a 169-residue protein sequence, read N- to C-terminus: Spore protein SP21 (169 aa).

Disordered stretches follow at residues 1–21 and 150–169; these read MADL…REWD and QPKR…HIKA. Positions 47–159 constitute a sHSP domain; sequence QGPPAFVPAF…QPKRIQVASS (113 aa).

Belongs to the small heat shock protein (HSP20) family.

In terms of biological role, may stabilize cellular components during stress and spore formation. The polypeptide is Spore protein SP21 (hspA) (Stigmatella aurantiaca (strain DW4/3-1)).